The following is a 387-amino-acid chain: Testis-expressed protein 9 (387 aa).

Disordered regions lie at residues 1 to 25 (MAGR…LAAG) and 58 to 133 (REQQ…LKYP). Polar residues-rich tracts occupy residues 70–91 (ALTT…SSEG) and 103–115 (KNTG…QNRL). Positions 184-347 (IGTEAQIRFL…ERQKGELMIG (164 aa)) form a coiled coil.

In terms of tissue distribution, testis-specific.

It localises to the cytoplasm. The protein resides in the cytoskeleton. Its subcellular location is the microtubule organizing center. The protein localises to the centrosome. It is found in the centriolar satellite. In Mus musculus (Mouse), this protein is Testis-expressed protein 9 (Tex9).